The chain runs to 68 residues: Galectin-10 (68 aa).

The Galectin domain occupies 1-68; that stretch reads EPYLQVDFHT…LSISVLPDKY (68 aa).

As to quaternary structure, interacts with CEL.

It is found in the cytoplasm. The protein localises to the cytosol. Its subcellular location is the cytoplasmic granule. Its function is as follows. Regulates immune responses through the recognition of cell-surface glycans. Essential for the anergy and suppressive function of CD25-positive regulatory T-cells (Treg). The chain is Galectin-10 (CLC) from Pongo pygmaeus (Bornean orangutan).